Here is a 339-residue protein sequence, read N- to C-terminus: Dual specificity protein phosphatase 12 (339 aa).

N-acetylmethionine is present on Met-1. The tract at residues Met-1–Gly-25 is disordered. A Tyrosine-protein phosphatase domain is found at His-26 to Glu-170. The active-site Phosphocysteine intermediate is the Cys-114. Residue His-115–Arg-120 participates in substrate binding. Ser-334 is subject to Phosphoserine.

This sequence belongs to the protein-tyrosine phosphatase family. Non-receptor class dual specificity subfamily. In terms of assembly, monomer. Zn(2+) serves as cofactor.

The protein localises to the nucleus. It localises to the cytoplasm. The protein resides in the cytosol. It catalyses the reaction O-phospho-L-tyrosyl-[protein] + H2O = L-tyrosyl-[protein] + phosphate. It carries out the reaction O-phospho-L-seryl-[protein] + H2O = L-seryl-[protein] + phosphate. The catalysed reaction is O-phospho-L-threonyl-[protein] + H2O = L-threonyl-[protein] + phosphate. Its function is as follows. Dual specificity phosphatase; can dephosphorylate both phosphotyrosine and phosphoserine or phosphothreonine residues. Can dephosphorylate glucokinase (in vitro). Has phosphatase activity with the synthetic substrate 6,8-difluoro-4-methylumbelliferyl phosphate and other in vitro substrates. The sequence is that of Dual specificity protein phosphatase 12 (Dusp12) from Mus musculus (Mouse).